Consider the following 125-residue polypeptide: Large ribosomal subunit protein bL20 (125 aa).

The protein belongs to the bacterial ribosomal protein bL20 family.

Binds directly to 23S ribosomal RNA and is necessary for the in vitro assembly process of the 50S ribosomal subunit. It is not involved in the protein synthesizing functions of that subunit. This chain is Large ribosomal subunit protein bL20, found in Methylobacterium nodulans (strain LMG 21967 / CNCM I-2342 / ORS 2060).